A 63-amino-acid polypeptide reads, in one-letter code: Metallothionein (63 aa).

Residues 1-30 (MDPQDCTCAAGDSCSCAGSCKCKNCRCRSC) are beta. Residues Cys6, Cys8, Cys14, Cys16, Cys20, Cys22, Cys25, Cys27, Cys30, Cys34, Cys35, Cys37, Cys38, Cys42, Cys45, Cys49, Cys51, Cys59, Cys61, and Cys62 each coordinate a divalent metal cation. Positions 31-63 (RKSCCSCCPAGCNNCAKGCVCKEPASSKCSCCH) are alpha.

This sequence belongs to the metallothionein superfamily. Type 1 family.

Functionally, metallothioneins have a high content of cysteine residues that bind various heavy metals. This chain is Metallothionein, found in Anas platyrhynchos (Mallard).